The primary structure comprises 110 residues: Parvalbumin alpha (110 aa).

2 EF-hand domains span residues 39 to 74 and 78 to 110; these read KGPDVMKQVFGILDQDRSGFIEEDELCLMLKGFTPN and LSVKETTALLAAGDKDGDGKIGMDEFVTLVSES. Ca(2+)-binding residues include Asp52, Asp54, Ser56, Phe58, Glu60, Glu63, Asp91, Asp93, Asp95, Lys97, and Glu102.

It belongs to the parvalbumin family.

Its function is as follows. In muscle, parvalbumin is thought to be involved in relaxation after contraction. It binds two calcium ions. This Aquarana catesbeiana (American bullfrog) protein is Parvalbumin alpha.